We begin with the raw amino-acid sequence, 56 residues long: Small ribosomal subunit protein uS14 (56 aa).

Positions 21, 24, 39, and 42 each coordinate Zn(2+).

It belongs to the universal ribosomal protein uS14 family. Zinc-binding uS14 subfamily. In terms of assembly, part of the 30S ribosomal subunit. Requires Zn(2+) as cofactor.

In terms of biological role, binds 16S rRNA, required for the assembly of 30S particles. The chain is Small ribosomal subunit protein uS14 from Pyrococcus furiosus (strain ATCC 43587 / DSM 3638 / JCM 8422 / Vc1).